A 490-amino-acid chain; its full sequence is Pyridine nucleotide-disulfide oxidoreductase domain-containing protein 1 (490 aa).

This sequence belongs to the class-I pyridine nucleotide-disulfide oxidoreductase family. PYROXD1 subfamily. Requires FAD as cofactor.

Its subcellular location is the nucleus. It is found in the cytoplasm. The protein resides in the myofibril. The protein localises to the sarcomere. Functionally, probable FAD-dependent oxidoreductase; involved in the cellular oxidative stress response. Required for normal sarcomere structure and muscle fiber integrity. The protein is Pyridine nucleotide-disulfide oxidoreductase domain-containing protein 1 (pyroxd1) of Danio rerio (Zebrafish).